The sequence spans 388 residues: Coproporphyrin III ferrochelatase (388 aa).

Residues S59 and Y124 each contribute to the Fe-coproporphyrin III site. Residues H186 and E276 each coordinate Fe(2+). The disordered stretch occupies residues Q349–D369.

This sequence belongs to the ferrochelatase family.

Its subcellular location is the cytoplasm. It catalyses the reaction Fe-coproporphyrin III + 2 H(+) = coproporphyrin III + Fe(2+). The protein operates within porphyrin-containing compound metabolism; protoheme biosynthesis. Functionally, involved in coproporphyrin-dependent heme b biosynthesis. Catalyzes the insertion of ferrous iron into coproporphyrin III to form Fe-coproporphyrin III. This chain is Coproporphyrin III ferrochelatase, found in Frankia alni (strain DSM 45986 / CECT 9034 / ACN14a).